A 273-amino-acid polypeptide reads, in one-letter code: Bis(5'-nucleosyl)-tetraphosphatase, symmetrical (273 aa).

This sequence belongs to the Ap4A hydrolase family.

The catalysed reaction is P(1),P(4)-bis(5'-adenosyl) tetraphosphate + H2O = 2 ADP + 2 H(+). In terms of biological role, hydrolyzes diadenosine 5',5'''-P1,P4-tetraphosphate to yield ADP. The sequence is that of Bis(5'-nucleosyl)-tetraphosphatase, symmetrical (apaH) from Buchnera aphidicola subsp. Schizaphis graminum (strain Sg).